The sequence spans 171 residues: MDRAQKEKVVEELGQIFESSGVVVVAHYAGITVAQMQDLRAQMREVGGSVRVAKNRLAKIALAGKPSEKMGDLLTGMTVMAYSEDPVAAAKVADAYAKKNDKFVILGGAMGDTILDPAGVKTVAAMPSREELIAQIVSCIGAPASNIAGAIGAPASNIAGILSTLEEREAA.

This sequence belongs to the universal ribosomal protein uL10 family. In terms of assembly, part of the ribosomal stalk of the 50S ribosomal subunit. The N-terminus interacts with L11 and the large rRNA to form the base of the stalk. The C-terminus forms an elongated spine to which L12 dimers bind in a sequential fashion forming a multimeric L10(L12)X complex.

Forms part of the ribosomal stalk, playing a central role in the interaction of the ribosome with GTP-bound translation factors. In Cereibacter sphaeroides (strain ATCC 17023 / DSM 158 / JCM 6121 / CCUG 31486 / LMG 2827 / NBRC 12203 / NCIMB 8253 / ATH 2.4.1.) (Rhodobacter sphaeroides), this protein is Large ribosomal subunit protein uL10.